The following is a 375-amino-acid chain: Succinyl-diaminopimelate desuccinylase (375 aa).

Position 66 (His66) interacts with Zn(2+). Asp68 is a catalytic residue. Asp99 serves as a coordination point for Zn(2+). Glu133 (proton acceptor) is an active-site residue. Zn(2+) contacts are provided by Glu134, Glu162, and His348.

Belongs to the peptidase M20A family. DapE subfamily. In terms of assembly, homodimer. Zn(2+) serves as cofactor. It depends on Co(2+) as a cofactor.

It carries out the reaction N-succinyl-(2S,6S)-2,6-diaminopimelate + H2O = (2S,6S)-2,6-diaminopimelate + succinate. The protein operates within amino-acid biosynthesis; L-lysine biosynthesis via DAP pathway; LL-2,6-diaminopimelate from (S)-tetrahydrodipicolinate (succinylase route): step 3/3. Its function is as follows. Catalyzes the hydrolysis of N-succinyl-L,L-diaminopimelic acid (SDAP), forming succinate and LL-2,6-diaminopimelate (DAP), an intermediate involved in the bacterial biosynthesis of lysine and meso-diaminopimelic acid, an essential component of bacterial cell walls. The polypeptide is Succinyl-diaminopimelate desuccinylase (Yersinia pestis bv. Antiqua (strain Antiqua)).